The sequence spans 239 residues: 1-(5-phosphoribosyl)-5-[(5-phosphoribosylamino)methylideneamino] imidazole-4-carboxamide isomerase (239 aa).

The Proton acceptor role is filled by aspartate 8. Aspartate 129 functions as the Proton donor in the catalytic mechanism.

This sequence belongs to the HisA/HisF family.

It is found in the cytoplasm. The enzyme catalyses 1-(5-phospho-beta-D-ribosyl)-5-[(5-phospho-beta-D-ribosylamino)methylideneamino]imidazole-4-carboxamide = 5-[(5-phospho-1-deoxy-D-ribulos-1-ylimino)methylamino]-1-(5-phospho-beta-D-ribosyl)imidazole-4-carboxamide. It participates in amino-acid biosynthesis; L-histidine biosynthesis; L-histidine from 5-phospho-alpha-D-ribose 1-diphosphate: step 4/9. This Legionella pneumophila (strain Corby) protein is 1-(5-phosphoribosyl)-5-[(5-phosphoribosylamino)methylideneamino] imidazole-4-carboxamide isomerase.